Here is a 480-residue protein sequence, read N- to C-terminus: MSDLNTKNVGKISQIIGPVLDIAFGQGQVPNIYNALTIKAKNAAGLEMSVTCEVQQLLGDSCVRAVAMNPTDGLMRGMEVLDTGKPLNVPVGKSTLGRIFNVLGEPVDNLGPVKNEESLPIHRTAPAFVDLDTRLSIFETGIKVVDLLAPYRRGGKIGLFGGAGVGKTVLIMELINNIAKAHGGVSVFAGVGERTREGNDLYTEMKESGVIVEKNLIDSKVALVYGQMNEPPGARMRVALTALTMAEYFRDVNKQDVLFFIDNIFRFVQAGAEVSALLGRMPSAVGYQPTLATEMGALQERITSTKDGSITSIQAVYVPADDLTDPAPATTFAHLDATTVLSRGLASKGIYPAVDPLDSTSTMLQPWILGEKHYGCAQSVKRTLQRYKELQDIIAILGLDELSEEDRLVVARARKIERFLSQPFFVAEVFTGSPGKYVSLAETIEGFNKILAGELDDLPEQAFYLVGNINEALTKAASMK.

161 to 168 (GGAGVGKT) contacts ATP.

Belongs to the ATPase alpha/beta chains family. In terms of assembly, F-type ATPases have 2 components, CF(1) - the catalytic core - and CF(0) - the membrane proton channel. CF(1) has five subunits: alpha(3), beta(3), gamma(1), delta(1), epsilon(1). CF(0) has four main subunits: a(1), b(1), b'(1) and c(9-12).

It localises to the plastid. Its subcellular location is the chloroplast thylakoid membrane. The catalysed reaction is ATP + H2O + 4 H(+)(in) = ADP + phosphate + 5 H(+)(out). Produces ATP from ADP in the presence of a proton gradient across the membrane. The catalytic sites are hosted primarily by the beta subunits. The sequence is that of ATP synthase subunit beta, chloroplastic from Tetradesmus obliquus (Green alga).